We begin with the raw amino-acid sequence, 390 residues long: Transforming growth factor beta-1 proprotein (390 aa).

The N-terminal stretch at 1 to 29 (MPPSGLRLLPLLLPLLWLLVLTPGRPAAG) is a signal peptide. The tract at residues 30-74 (LSTCKTIDMELVKRKRIEAIRGQILSKLRLASPPSQGEVPPGPLP) is straightjacket domain. The arm domain stretch occupies residues 75-271 (EAVLALYNST…ATPLERAQHL (197 aa)). N82, N136, and N176 each carry an N-linked (GlcNAc...) asparagine glycan. The segment at 226–252 (DSRDNTLQVDINGFTTGRRGDLATIHG) is bowtie tail. The short motif at 244–246 (RGD) is the Cell attachment site element. Disulfide bonds link C285/C294, C293/C356, C322/C387, and C326/C389.

The protein belongs to the TGF-beta family. As to quaternary structure, homodimer; disulfide-linked. Interacts with the serine proteases, HTRA1 and HTRA3: the interaction with either inhibits TGFB1-mediated signaling and the HTRA protease activity is required for this inhibition. May interact with THSD4; this interaction may lead to sequestration by FBN1 microfibril assembly and attenuation of TGFB signaling. Interacts with CD109, DPT and ASPN. Interacts with EFEMP2. Interacts with TSKU; the interaction contributes to regulation of the hair cycle. In terms of assembly, homodimer; disulfide-linked. Interacts with transforming growth factor beta-1 (TGF-beta-1) chain; interaction is non-covalent and maintains TGF-beta-1 in a latent state; each latency-associated peptide (LAP) monomer interacts with TGF-beta-1 in the other monomer. Interacts with LTBP1; leading to regulation of TGF-beta-1 activation. Interacts with LRRC32/GARP; leading to regulation of TGF-beta-1 activation on the surface of activated regulatory T-cells (Tregs). Interacts with LRRC33/NRROS; leading to regulation of TGF-beta-1 in macrophages and microglia. Interacts (via cell attachment site) with integrins ITGAV and ITGB6 (ITGAV:ITGB6), leading to release of the active TGF-beta-1. Interacts with NREP; the interaction results in a decrease in TGFB1 autoinduction. Interacts with HSP90AB1; inhibits latent TGFB1 activation. Interact with PSG9; leading to TGFB1 activation. Interacts with TGFBR3. Homodimer; disulfide-linked. Interacts with TGF-beta receptors (TGFBR1 and TGFBR2), leading to signal transduction. Post-translationally, transforming growth factor beta-1 proprotein: The precursor proprotein is cleaved in the Golgi apparatus by FURIN to form Transforming growth factor beta-1 (TGF-beta-1) and Latency-associated peptide (LAP) chains, which remain non-covalently linked, rendering TGF-beta-1 inactive. In terms of processing, N-glycosylated. Deglycosylation leads to activation of Transforming growth factor beta-1 (TGF-beta-1); mechanisms triggering deglycosylation-driven activation of TGF-beta-1 are however unclear. As to expression, highly expressed in bone. Abundantly expressed in articular cartilage and chondrocytes and is increased in osteoarthritis (OA). Colocalizes with ASPN in chondrocytes within OA lesions of articular cartilage.

It is found in the secreted. It localises to the extracellular space. Its subcellular location is the extracellular matrix. Its function is as follows. Transforming growth factor beta-1 proprotein: Precursor of the Latency-associated peptide (LAP) and Transforming growth factor beta-1 (TGF-beta-1) chains, which constitute the regulatory and active subunit of TGF-beta-1, respectively. In terms of biological role, required to maintain the Transforming growth factor beta-1 (TGF-beta-1) chain in a latent state during storage in extracellular matrix. Associates non-covalently with TGF-beta-1 and regulates its activation via interaction with 'milieu molecules', such as LTBP1, LRRC32/GARP and LRRC33/NRROS, that control activation of TGF-beta-1. Interaction with LRRC33/NRROS regulates activation of TGF-beta-1 in macrophages and microglia. Interaction with LRRC32/GARP controls activation of TGF-beta-1 on the surface of activated regulatory T-cells (Tregs). Interaction with integrins (ITGAV:ITGB6 or ITGAV:ITGB8) results in distortion of the Latency-associated peptide chain and subsequent release of the active TGF-beta-1. Functionally, multifunctional protein that regulates the growth and differentiation of various cell types and is involved in various processes, such as normal development, immune function, microglia function and responses to neurodegeneration. Activation into mature form follows different steps: following cleavage of the proprotein in the Golgi apparatus, Latency-associated peptide (LAP) and Transforming growth factor beta-1 (TGF-beta-1) chains remain non-covalently linked rendering TGF-beta-1 inactive during storage in extracellular matrix. At the same time, LAP chain interacts with 'milieu molecules', such as LTBP1, LRRC32/GARP and LRRC33/NRROS that control activation of TGF-beta-1 and maintain it in a latent state during storage in extracellular milieus. TGF-beta-1 is released from LAP by integrins (ITGAV:ITGB6 or ITGAV:ITGB8): integrin-binding to LAP stabilizes an alternative conformation of the LAP bowtie tail and results in distortion of the LAP chain and subsequent release of the active TGF-beta-1. Once activated following release of LAP, TGF-beta-1 acts by binding to TGF-beta receptors (TGFBR1 and TGFBR2), which transduce signal. While expressed by many cells types, TGF-beta-1 only has a very localized range of action within cell environment thanks to fine regulation of its activation by Latency-associated peptide chain (LAP) and 'milieu molecules'. Plays an important role in bone remodeling: acts as a potent stimulator of osteoblastic bone formation, causing chemotaxis, proliferation and differentiation in committed osteoblasts. Can promote either T-helper 17 cells (Th17) or regulatory T-cells (Treg) lineage differentiation in a concentration-dependent manner. At high concentrations, leads to FOXP3-mediated suppression of RORC and down-regulation of IL-17 expression, favoring Treg cell development. At low concentrations in concert with IL-6 and IL-21, leads to expression of the IL-17 and IL-23 receptors, favoring differentiation to Th17 cells. Stimulates sustained production of collagen through the activation of CREB3L1 by regulated intramembrane proteolysis (RIP). Mediates SMAD2/3 activation by inducing its phosphorylation and subsequent translocation to the nucleus. Positively regulates odontoblastic differentiation in dental papilla cells, via promotion of IPO7-mediated translocation of phosphorylated SMAD2 to the nucleus and subsequent transcription of target genes. Can induce epithelial-to-mesenchymal transition (EMT) and cell migration in various cell types. In Homo sapiens (Human), this protein is Transforming growth factor beta-1 proprotein.